The primary structure comprises 534 residues: Glucans biosynthesis protein D (534 aa).

A signal peptide (tat-type signal) is located at residues methionine 1–alanine 28.

The protein belongs to the OpgD/OpgG family. Predicted to be exported by the Tat system. The position of the signal peptide cleavage has not been experimentally proven.

Its subcellular location is the periplasm. The protein operates within glycan metabolism; osmoregulated periplasmic glucan (OPG) biosynthesis. In terms of biological role, probably involved in the control of the structural glucose backbone of osmoregulated periplasmic glucans (OPGs). The polypeptide is Glucans biosynthesis protein D (Xylella fastidiosa (strain M23)).